The following is a 142-amino-acid chain: ATP synthase epsilon chain (142 aa).

Belongs to the ATPase epsilon chain family. F-type ATPases have 2 components, CF(1) - the catalytic core - and CF(0) - the membrane proton channel. CF(1) has five subunits: alpha(3), beta(3), gamma(1), delta(1), epsilon(1). CF(0) has three main subunits: a, b and c.

The protein localises to the cell inner membrane. Functionally, produces ATP from ADP in the presence of a proton gradient across the membrane. This Shewanella piezotolerans (strain WP3 / JCM 13877) protein is ATP synthase epsilon chain.